Reading from the N-terminus, the 790-residue chain is Tumor necrosis factor alpha-induced protein 3 (790 aa).

Ala2 is subject to N-acetylalanine. The tract at residues 58–300 (PQFREIIHKA…LTDPENEMKE (243 aa)) is TRAF-binding. One can recognise an OTU domain in the interval 92–263 (LVALKTNGDG…SHHFVPLVTL (172 aa)). Asp100 is a catalytic residue. Residue Cys103 is the Nucleophile of the active site. Interaction with ubiquitin stretches follow at residues 157–159 (LCY), 190–192 (SLE), and 224–227 (FAPL). The active-site Proton acceptor is His256. The tract at residues 369 to 775 (AQNPMESSLP…ACDHFGNAKC (407 aa)) is interaction with TNIP1. An A20-type 1 zinc finger spans residues 381–416 (SLMDVKCETPNCPFFMSVNTQPLCHECSERRQKNQN). The tract at residues 386-453 (KCETPNCPFF…EPLAWNPEEP (68 aa)) is interaction with RIPK1. Zn(2+) is bound by residues Cys387, Cys392, Cys404, and Cys407. Residues 415–467 (QNKLPKLNSKPGPEGLPGMALGASRGEAYEPLAWNPEEPTGGPHSAPPTAPSP) are disordered. A Phosphoserine modification is found at Ser459. 2 A20-type zinc fingers span residues 472–507 (ETTA…LHAS) and 515–548 (HLDP…AEAS). The Zn(2+) site is built by Cys478, Cys483, Cys495, Cys498, Cys521, Cys524, Cys536, and Cys539. The disordered stretch occupies residues 550 to 580 (SLSTSLPPSCHQRSKSDPSQLVRSPSPHSCH). Residues 566–576 (DPSQLVRSPSP) are compositionally biased toward polar residues. The residue at position 575 (Ser575) is a Phosphoserine. The A20-type 4 zinc-finger motif lies at 601–636 (RTGTSKCRKAGCMYFGTPENKGFCTLCFIEYRENKH). Positions 605–655 (SKCRKAGCMYFGTPENKGFCTLCFIEYRENKHLVAASGKASPTASRFQNTI) are required for proteasomal degradation of UBE2N and UBE2D3, TRAF6 deubiquitination, and TAX1BP1 interaction with UBE2N. A sufficient for inhibitory activity of TNF-induced NF-kappa-B activity region spans residues 606 to 790 (KCRKAGCMYF…ECFQFKQMYG (185 aa)). Zn(2+) is bound by residues Cys607, Cys612, Cys624, and Cys627. Position 645 is a phosphoserine (Ser645). The segment at 651 to 686 (FQNTIPCLGRECGTLGSTMFEGYCQKCFIEAQNQRF) adopts an A20-type 5 zinc-finger fold. Residues Cys657, Cys662, Cys674, and Cys677 each coordinate Zn(2+). Residues 689–705 (AKRTEEQLRSSQRRDVP) are compositionally biased toward basic and acidic residues. The segment at 689 to 712 (AKRTEEQLRSSQRRDVPRTTQSTS) is disordered. Residues 697–790 (RSSQRRDVPR…ECFQFKQMYG (94 aa)) are required for lysosomal localization and for TRAF2 lysosomal degradation. A20-type zinc fingers lie at residues 710–745 (STSR…RMGP) and 756–790 (DPPK…QMYG). 8 residues coordinate Zn(2+): Cys716, Cys721, Cys733, Cys736, Cys762, Cys767, Cys779, and Cys782.

Belongs to the peptidase C64 family. In terms of assembly, homodimer. Interacts with TNIP1, TAX1BP1 and TRAF2. Interacts with RNF11, ITCH and TAX1BP1 only after TNF stimulation; these interaction are transient and they are lost after 1 hour of stimulation with TNF. Interacts with YWHAZ and YWHAH. Interacts with IKBKG; the interaction is induced by TNF stimulation and by polyubiquitin. Interacts with RIPK1. Interacts with UBE2N; the interaction requires TAX1BP1. Interacts with TRAF6. In terms of processing, proteolytically cleaved by MALT1 upon TCR stimulation; disrupts NF-kappa-B inhibitory function and results in increased IL-2 production. It is proposed that only a fraction of TNFAIP3 colocalized with TCR and CBM complex is cleaved, leaving the main TNFAIP3 pool intact.

It is found in the cytoplasm. It localises to the nucleus. Its subcellular location is the lysosome. It catalyses the reaction Thiol-dependent hydrolysis of ester, thioester, amide, peptide and isopeptide bonds formed by the C-terminal Gly of ubiquitin (a 76-residue protein attached to proteins as an intracellular targeting signal).. Functionally, ubiquitin-editing enzyme that contains both ubiquitin ligase and deubiquitinase activities. Involved in immune and inflammatory responses signaled by cytokines, such as TNF-alpha and IL-1 beta, or pathogens via Toll-like receptors (TLRs) through terminating NF-kappa-B activity. Essential component of a ubiquitin-editing protein complex, comprising also RNF11, ITCH and TAX1BP1, that ensures the transient nature of inflammatory signaling pathways. In cooperation with TAX1BP1 promotes disassembly of E2-E3 ubiquitin protein ligase complexes in IL-1R and TNFR-1 pathways; affected are at least E3 ligases TRAF6, TRAF2 and BIRC2, and E2 ubiquitin-conjugating enzymes UBE2N and UBE2D3. In cooperation with TAX1BP1 promotes ubiquitination of UBE2N and proteasomal degradation of UBE2N and UBE2D3. Upon TNF stimulation, deubiquitinates 'Lys-63'-polyubiquitin chains on RIPK1 and catalyzes the formation of 'Lys-48'-polyubiquitin chains. This leads to RIPK1 proteasomal degradation and consequently termination of the TNF- or LPS-mediated activation of NF-kappa-B. Deubiquitinates TRAF6 probably acting on 'Lys-63'-linked polyubiquitin. Upon T-cell receptor (TCR)-mediated T-cell activation, deubiquitinates 'Lys-63'-polyubiquitin chains on MALT1 thereby mediating disassociation of the CBM (CARD11:BCL10:MALT1) and IKK complexes and preventing sustained IKK activation. Deubiquitinates NEMO/IKBKG; the function is facilitated by TNIP1 and leads to inhibition of NF-kappa-B activation. Upon stimulation by bacterial peptidoglycans, probably deubiquitinates RIPK2. Can also inhibit I-kappa-B-kinase (IKK) through a non-catalytic mechanism which involves polyubiquitin; polyubiquitin promotes association with IKBKG and prevents IKK MAP3K7-mediated phosphorylation. Targets TRAF2 for lysosomal degradation. In vitro able to deubiquitinate 'Lys-11'-, 'Lys-48'- and 'Lys-63' polyubiquitin chains. Inhibitor of programmed cell death. Has a role in the function of the lymphoid system. Required for LPS-induced production of pro-inflammatory cytokines and IFN beta in LPS-tolerized macrophages. The chain is Tumor necrosis factor alpha-induced protein 3 (TNFAIP3) from Macaca fascicularis (Crab-eating macaque).